We begin with the raw amino-acid sequence, 290 residues long: Elongation factor Ts (290 aa).

The interval 82 to 85 (TDFV) is involved in Mg(2+) ion dislocation from EF-Tu.

The protein belongs to the EF-Ts family.

It is found in the cytoplasm. In terms of biological role, associates with the EF-Tu.GDP complex and induces the exchange of GDP to GTP. It remains bound to the aminoacyl-tRNA.EF-Tu.GTP complex up to the GTP hydrolysis stage on the ribosome. The sequence is that of Elongation factor Ts from Cellvibrio japonicus (strain Ueda107) (Pseudomonas fluorescens subsp. cellulosa).